The chain runs to 189 residues: Photosystem I assembly protein Ycf4 (189 aa).

2 helical membrane-spanning segments follow: residues 29–49 (WATIVTLGASGFLLAGISSYL) and 69–89 (LVMGLYGAAGLLLATYLWLVI).

The protein belongs to the Ycf4 family.

It is found in the cellular thylakoid membrane. Its function is as follows. Seems to be required for the assembly of the photosystem I complex. The polypeptide is Photosystem I assembly protein Ycf4 (Nostoc punctiforme (strain ATCC 29133 / PCC 73102)).